Consider the following 3623-residue polypeptide: Cubilin (3623 aa).

Residues 1–23 (MMNMSLPFLWSLLTLLIFAEVNG) form the signal peptide. The propeptide at 24-35 (EAGELELQRQKR) is removed in mature form. An interaction with AMN region spans residues 42 to 49 (PRMATERG). Residue asparagine 105 is glycosylated (N-linked (GlcNAc...) asparagine). One can recognise an EGF-like 1 domain in the interval 132 to 168 (DKKVCSSNPCQNGGTCLNLHDSFFCICPPQWKGPLCS). 9 disulfides stabilise this stretch: cysteine 136/cysteine 147, cysteine 141/cysteine 156, cysteine 158/cysteine 167, cysteine 174/cysteine 190, cysteine 184/cysteine 199, cysteine 201/cysteine 210, cysteine 267/cysteine 280, cysteine 274/cysteine 289, and cysteine 292/cysteine 303. One can recognise an EGF-like 2; calcium-binding domain in the interval 170-211 (DVNECEIYSGTPLSCQNGGTCVNTMGSYSCHCPPETYGPQCA). Residues 263–304 (DRDECSFQPGPCSTLVQCFNTQGSFYCGACPTGWQGNGYICE) enclose the EGF-like 3; calcium-binding domain. One can recognise an EGF-like 4; calcium-binding domain in the interval 305–348 (DINECEINNGGCSVAPPVECVNTPGSSHCQACPPGYQGDGRVCT). EGF-like domains follow at residues 349–385 (LTDI…YTGN) and 395–430 (LSNI…VNCT). 13 disulfides stabilise this stretch: cysteine 353/cysteine 366, cysteine 360/cysteine 376, cysteine 399/cysteine 409, cysteine 404/cysteine 418, cysteine 420/cysteine 429, cysteine 436/cysteine 447, cysteine 441/cysteine 456, cysteine 458/cysteine 467, cysteine 474/cysteine 500, cysteine 527/cysteine 549, cysteine 590/cysteine 616, cysteine 643/cysteine 665, and cysteine 708/cysteine 734. Asparagine 428 is a glycosylation site (N-linked (GlcNAc...) asparagine). The region spanning 432 to 468 (NINECLSNPCLNGGTCVDGVDSFSCECTRLWTGALCQ) is the EGF-like 7; calcium-binding domain. 27 CUB domains span residues 474–586 (CGES…WETQ), 590–702 (CGGI…YLTS), 708–816 (CGGN…YQVA), 816–928 (ACGD…FSAE), 932–1042 (CGEI…YEAI), 1048–1161 (CLQD…WDGS), 1165–1277 (CGGN…YRQT), 1278–1389 (CENV…WFVY), 1391–1506 (CGGE…WQAV), 1510–1619 (CGGI…FRQA), 1620–1734 (CGGH…VTAS), 1738–1850 (CGGT…FMKI), 1852–1963 (GNDN…WFAV), 1978–2091 (CGGF…FHKS), 2092–2213 (CGGY…YEAK), 2217–2334 (CGGN…YSIA), 2336–2448 (CGGR…FESS), 2452–2565 (CGGD…YTSS), 2570–2687 (CGGS…YSFT), 2689–2801 (CGGI…WNTQ), 2805–2919 (CGGI…FVSR), 2920–3035 (CGSN…YRII), 3037–3150 (CGGV…FRQT), 3157–3274 (CGGY…YTIM), 3278–3393 (CGGT…YQIA), 3395–3507 (CNRD…WTSS), and 3511–3623 (CGGT…TWDS). The N-linked (GlcNAc...) asparagine glycan is linked to asparagine 482. Asparagine 711, asparagine 749, asparagine 781, and asparagine 857 each carry an N-linked (GlcNAc...) asparagine glycan. 2 cysteine pairs are disulfide-bonded: cysteine 869/cysteine 891 and cysteine 932/cysteine 958. N-linked (GlcNAc...) asparagine glycosylation occurs at asparagine 957. Ca(2+) is bound at residue glutamate 980. An N-linked (GlcNAc...) asparagine glycan is attached at asparagine 984. Residues cysteine 985 and cysteine 1005 are joined by a disulfide bond. Residues aspartate 988, aspartate 1027, aspartate 1029, and leucine 1030 each coordinate Ca(2+). Cysteine 1048 and cysteine 1074 are disulfide-bonded. The N-linked (GlcNAc...) asparagine glycan is linked to asparagine 1092. Ca(2+)-binding residues include glutamate 1096, aspartate 1105, aspartate 1146, isoleucine 1148, and aspartate 1149. Cysteine 1165 and cysteine 1191 are disulfide-bonded. Asparagine 1168 carries N-linked (GlcNAc...) asparagine glycosylation. Position 1213 (glutamate 1213) interacts with Ca(2+). An N-linked (GlcNAc...) asparagine glycan is attached at asparagine 1217. Cysteines 1218 and 1240 form a disulfide. Residues aspartate 1221, aspartate 1262, glycine 1264, and glutamine 1265 each coordinate Ca(2+). The cysteines at positions 1278 and 1306 are disulfide-linked. Residues asparagine 1285, asparagine 1307, and asparagine 1319 are each glycosylated (N-linked (GlcNAc...) asparagine). Position 1328 (glutamate 1328) interacts with Ca(2+). A glycan (N-linked (GlcNAc...) asparagine) is linked at asparagine 1332. Cysteine 1333 and cysteine 1351 are oxidised to a cystine. Ca(2+) contacts are provided by aspartate 1336, aspartate 1373, and valine 1375. Intrachain disulfides connect cysteine 1391–cysteine 1417 and cysteine 1444–cysteine 1466. An N-linked (GlcNAc...) asparagine glycan is attached at asparagine 1500. A disulfide bond links cysteine 1510 and cysteine 1536. The N-linked (GlcNAc...) asparagine glycan is linked to asparagine 1551. 5 disulfides stabilise this stretch: cysteine 1563/cysteine 1581, cysteine 1620/cysteine 1647, cysteine 1675/cysteine 1697, cysteine 1738/cysteine 1764, and cysteine 1791/cysteine 1812. Asparagine 1646 carries an N-linked (GlcNAc...) asparagine glycan. N-linked (GlcNAc...) asparagine glycosylation is found at asparagine 1802, asparagine 1819, and asparagine 1885. 3 disulfide bridges follow: cysteine 1905–cysteine 1927, cysteine 1978–cysteine 2006, and cysteine 2032–cysteine 2054. N-linked (GlcNAc...) asparagine glycans are attached at residues asparagine 2085 and asparagine 2117. Cystine bridges form between cysteine 2092/cysteine 2118 and cysteine 2217/cysteine 2247. N-linked (GlcNAc...) asparagine glycosylation occurs at asparagine 2274. 2 disulfides stabilise this stretch: cysteine 2275–cysteine 2297 and cysteine 2336–cysteine 2363. Residues asparagine 2386 and asparagine 2400 are each glycosylated (N-linked (GlcNAc...) asparagine). Cystine bridges form between cysteine 2390–cysteine 2411, cysteine 2452–cysteine 2478, and cysteine 2505–cysteine 2527. N-linked (GlcNAc...) asparagine glycans are attached at residues asparagine 2531, asparagine 2581, asparagine 2592, and asparagine 2610. Cysteine 2570 and cysteine 2599 are joined by a disulfide. Disulfide bonds link cysteine 2628/cysteine 2649, cysteine 2689/cysteine 2715, cysteine 2742/cysteine 2764, cysteine 2805/cysteine 2831, cysteine 2860/cysteine 2883, cysteine 2920/cysteine 2946, and cysteine 2977/cysteine 2999. Asparagine 2813 is a glycosylation site (N-linked (GlcNAc...) asparagine). Residues asparagine 2923 and asparagine 2945 are each glycosylated (N-linked (GlcNAc...) asparagine). Phosphothreonine is present on threonine 3008. Cystine bridges form between cysteine 3037–cysteine 3064 and cysteine 3091–cysteine 3113. Residues asparagine 3042, asparagine 3103, asparagine 3125, and asparagine 3165 are each glycosylated (N-linked (GlcNAc...) asparagine). Disulfide bonds link cysteine 3157–cysteine 3185 and cysteine 3215–cysteine 3237. N-linked (GlcNAc...) asparagine glycans are attached at residues asparagine 3268, asparagine 3283, asparagine 3290, and asparagine 3295. 2 disulfides stabilise this stretch: cysteine 3278–cysteine 3306 and cysteine 3332–cysteine 3354. An N-linked (GlcNAc...) asparagine glycan is attached at asparagine 3357. Residues cysteine 3395 and cysteine 3421 are joined by a disulfide bond. N-linked (GlcNAc...) asparagine glycans are attached at residues asparagine 3430, asparagine 3457, asparagine 3533, and asparagine 3576. Cystine bridges form between cysteine 3448–cysteine 3470, cysteine 3511–cysteine 3537, and cysteine 3564–cysteine 3586.

Interacts with AMN. Component of the cubam complex composed of one CUBN trimer and one AMN chain. The cubam complex can dimerize. Interacts with LRP2 in a dual-receptor complex in a calcium-dependent manner. Found in a complex with PID1/PCLI1, LRP1 and CUBNI. Interacts with LRP1 and PID1/PCLI1. In terms of processing, the precursor is cleaved by a trans-Golgi proteinase furin, removing a propeptide. N-glycosylated. In terms of tissue distribution, detected in kidney cortex (at protein level). Expressed in kidney proximal tubule cells, placenta, visceral yolk-sac cells and in absorptive intestinal cells. Expressed in the epithelium of intestine and kidney.

It localises to the apical cell membrane. The protein localises to the cell membrane. Its subcellular location is the membrane. It is found in the coated pit. The protein resides in the endosome. It localises to the lysosome membrane. Its function is as follows. Endocytic receptor which plays a role in lipoprotein, vitamin and iron metabolism by facilitating their uptake. Acts together with LRP2 to mediate endocytosis of high-density lipoproteins, GC, hemoglobin, ALB, TF and SCGB1A1. Acts together with AMN to mediate endocytosis of the CBLIF-cobalamin complex. Binds to ALB, MB, Kappa and lambda-light chains, TF, hemoglobin, GC, SCGB1A1, APOA1, high density lipoprotein, and the CBLIF-cobalamin complex. Ligand binding requires calcium. Serves as important transporter in several absorptive epithelia, including intestine, renal proximal tubules and embryonic yolk sac. May play an important role in the development of the peri-implantation embryo through internalization of APOA1 and cholesterol. Binds to LGALS3 at the maternal-fetal interface. The polypeptide is Cubilin (CUBN) (Homo sapiens (Human)).